The following is a 113-amino-acid chain: Nucleoid-associated protein ROP_41370 (113 aa).

It belongs to the YbaB/EbfC family. Homodimer.

It localises to the cytoplasm. Its subcellular location is the nucleoid. Its function is as follows. Binds to DNA and alters its conformation. May be involved in regulation of gene expression, nucleoid organization and DNA protection. This chain is Nucleoid-associated protein ROP_41370, found in Rhodococcus opacus (strain B4).